We begin with the raw amino-acid sequence, 260 residues long: Hydroxyethylthiazole kinase 1 (260 aa).

Met39 contacts substrate. Arg115 and Thr160 together coordinate ATP. Gly187 is a binding site for substrate.

The protein belongs to the Thz kinase family. It depends on Mg(2+) as a cofactor.

The enzyme catalyses 5-(2-hydroxyethyl)-4-methylthiazole + ATP = 4-methyl-5-(2-phosphooxyethyl)-thiazole + ADP + H(+). Its pathway is cofactor biosynthesis; thiamine diphosphate biosynthesis; 4-methyl-5-(2-phosphoethyl)-thiazole from 5-(2-hydroxyethyl)-4-methylthiazole: step 1/1. Catalyzes the phosphorylation of the hydroxyl group of 4-methyl-5-beta-hydroxyethylthiazole (THZ). The polypeptide is Hydroxyethylthiazole kinase 1 (Streptococcus pneumoniae (strain Hungary19A-6)).